A 150-amino-acid chain; its full sequence is uncharacterized protein (150 aa).

Belongs to the IIV-6 391R family.

This is an uncharacterized protein from Invertebrate iridescent virus 3 (IIV-3).